The following is a 738-amino-acid chain: Junction plakoglobin (738 aa).

ARM repeat units follow at residues 128–167, 168–211, 212–251, 254–293, 294–337, 338–377, 379–416, 419–460, 466–506, 508–547, 570–609, and 611–657; these read NYQD…QLSK, KEAS…LSHH, REGL…NLLL, EGAK…LLAY, GNQE…LSVC, PSNK…NLSD, ATKQ…NLTC, GRNK…HLTS, EVAQ…NLAL, PANH…QPYT, PVNR…ELAQ, and KEAA…ADYR.

It belongs to the beta-catenin family. Homodimer.

Its subcellular location is the cell junction. It localises to the adherens junction. It is found in the desmosome. The protein resides in the cytoplasm. The protein localises to the cytoskeleton. Its subcellular location is the membrane. Functionally, common junctional plaque protein. The membrane-associated plaques are architectural elements in an important strategic position to influence the arrangement and function of both the cytoskeleton and the cells within the tissue. The presence of plakoglobin in both the desmosomes and in the intermediate junctions suggests that it plays a central role in the structure and function of submembranous plaques. The protein is Junction plakoglobin (jup) of Xenopus laevis (African clawed frog).